A 182-amino-acid polypeptide reads, in one-letter code: Lipid A acyltransferase PagP (182 aa).

Positions methionine 1 to alanine 21 are cleaved as a signal peptide. Residue cysteine 22 is the site of N-palmitoyl cysteine attachment. Cysteine 22 carries the S-diacylglycerol cysteine lipid modification. Residues histidine 55, aspartate 98, and serine 99 contribute to the active site.

This sequence belongs to the lipid A palmitoyltransferase family. In terms of assembly, homodimer.

Its subcellular location is the cell outer membrane. It carries out the reaction a lipid A + a 1,2-diacyl-sn-glycero-3-phosphocholine = a hepta-acyl lipid A + a 2-acyl-sn-glycero-3-phosphocholine. The catalysed reaction is a lipid IVA + a 1,2-diacyl-sn-glycero-3-phosphocholine = a lipid IVB + a 2-acyl-sn-glycero-3-phosphocholine. The enzyme catalyses a lipid IIA + a 1,2-diacyl-sn-glycero-3-phosphocholine = a lipid IIB + a 2-acyl-sn-glycero-3-phosphocholine. Functionally, transfers a fatty acid residue from the sn-1 position of a phospholipid to the N-linked hydroxyfatty acid chain on the proximal unit of lipid A or its precursors. This chain is Lipid A acyltransferase PagP, found in Bordetella parapertussis (strain 12822 / ATCC BAA-587 / NCTC 13253).